We begin with the raw amino-acid sequence, 323 residues long: Phosphomevalonate kinase (323 aa).

Belongs to the GHMP kinase family. In terms of assembly, homodimer. It depends on Mg(2+) as a cofactor.

It carries out the reaction (R)-5-phosphomevalonate + ATP = (R)-5-diphosphomevalonate + ADP. Its pathway is isoprenoid biosynthesis; isopentenyl diphosphate biosynthesis via mevalonate pathway; isopentenyl diphosphate from (R)-mevalonate: step 2/3. Functionally, catalyzes the phosphorylation of (R)-mevalonate 5-phosphate (MVAP) to (R)-mevalonate 5-diphosphate (MVAPP). Functions in the mevalonate (MVA) pathway leading to isopentenyl diphosphate (IPP), a key precursor for the biosynthesis of isoprenoid compounds such as archaeal membrane lipids. This chain is Phosphomevalonate kinase, found in Saccharolobus solfataricus (strain ATCC 35092 / DSM 1617 / JCM 11322 / P2) (Sulfolobus solfataricus).